The primary structure comprises 327 residues: Chain length determinant protein (327 aa).

Topologically, residues 1–31 are cytoplasmic; sequence MTVDSNTSSGRGNDPEQIDLIELLLQLWRGK. The helical transmembrane segment at 32–52 threads the bilayer; sequence MTIIVAVIIAILLAVGYLMIA. The Periplasmic segment spans residues 53-294; sequence KEKWTSTAII…LPVRRDSPKT (242 aa). Residues 295-315 form a helical membrane-spanning segment; the sequence is AITLVLAVLLGGMIGAGIVLG. The Cytoplasmic segment spans residues 316-327; the sequence is RNALRSYKPKAL.

Belongs to the WzzB/Cld/Rol family.

The protein localises to the cell inner membrane. It participates in bacterial outer membrane biogenesis; lipopolysaccharide biosynthesis. Its function is as follows. Confers a modal distribution of chain length on the O-antigen component of lipopolysaccharide (LPS). Gives rise to a reduced number of short chain molecules and increases in numbers of longer molecules, with a modal value of 20. This chain is Chain length determinant protein (wzzB), found in Salmonella typhimurium (strain LT2 / SGSC1412 / ATCC 700720).